The chain runs to 334 residues: Phosphate acyltransferase (334 aa).

It belongs to the PlsX family. As to quaternary structure, homodimer. Probably interacts with PlsY.

The protein resides in the cytoplasm. The catalysed reaction is a fatty acyl-[ACP] + phosphate = an acyl phosphate + holo-[ACP]. It participates in lipid metabolism; phospholipid metabolism. Catalyzes the reversible formation of acyl-phosphate (acyl-PO(4)) from acyl-[acyl-carrier-protein] (acyl-ACP). This enzyme utilizes acyl-ACP as fatty acyl donor, but not acyl-CoA. This Mycoplasma capricolum subsp. capricolum (strain California kid / ATCC 27343 / NCTC 10154) protein is Phosphate acyltransferase.